We begin with the raw amino-acid sequence, 137 residues long: Ribosome-binding factor A (137 aa).

The protein belongs to the RbfA family. Monomer. Binds 30S ribosomal subunits, but not 50S ribosomal subunits or 70S ribosomes.

Its subcellular location is the cytoplasm. In terms of biological role, one of several proteins that assist in the late maturation steps of the functional core of the 30S ribosomal subunit. Associates with free 30S ribosomal subunits (but not with 30S subunits that are part of 70S ribosomes or polysomes). Required for efficient processing of 16S rRNA. May interact with the 5'-terminal helix region of 16S rRNA. This is Ribosome-binding factor A from Rhodopseudomonas palustris (strain TIE-1).